A 518-amino-acid polypeptide reads, in one-letter code: F-box protein At1g47056 (518 aa).

Residues 37–82 enclose the F-box domain; it reads PDYTSSLPDECLALVFQFLNSGNRKRCALVCRRWMIVEGQNRYRLS.

This Arabidopsis thaliana (Mouse-ear cress) protein is F-box protein At1g47056.